A 666-amino-acid chain; its full sequence is TATA box-binding protein-associated factor RNA polymerase I subunit B (666 aa).

The RRN7-type zinc finger occupies 1 to 29 (MICTECENDAFDEEDDGYYYCQRCGVQVE). Residues cysteine 3, cysteine 6, cysteine 21, and cysteine 24 each contribute to the Zn(2+) site. The interval 30-64 (NLIQTGVDDGDLIGEGGGTQGALYNPKHRRTEPQP) is B-reader. 2 disordered regions span residues 45–110 (GGGT…VDKE) and 189–208 (DSEHQSEDGEVKDAKRLKRH). The tract at residues 65–80 (ITPSQPRFTDDTSRYS) is B-linker. Positions 78 to 89 (RYSQFKSQFESE) are enriched in polar residues. The N-terminal cyclin fold stretch occupies residues 81 to 285 (QFKSQFESEN…REQMGERSAA (205 aa)). Basic and acidic residues-rich tracts occupy residues 90 to 110 (NGNKELPREVKRAPDSYVDKE) and 189 to 202 (DSEHQSEDGEVKDA). Residues 286-288 (CPV) are C-terminal cyclin fold. The tract at residues 515 to 548 (SDGNNPCSSSSRRNESVSIGLDLSSSEHRESSSP) is disordered. The segment covering 539-548 (SSEHRESSSP) has biased composition (basic and acidic residues).

The protein belongs to the RRN7/TAF1B family. In terms of assembly, interacts with TFIIF. Interacts with MEE14/CBP1, TBP1 and NRPB1 (via CTD). As to expression, expressed at high levels in seedlings, inflorescences and young siliques and at lower levels in roots. Not detected in leaves and stems. Detected in root tips and shoot apical meristems, in anthers, primarily in microspores with weaker expression in mature pollen grains and in the central cell of the mature female gametophyte. Not expressed in synergids, egg cells, antipodal cells, endosperm cells and fertilized egg cells.

The protein localises to the nucleus. The protein resides in the nucleolus. Functionally, component of RNA polymerase I core factor complex that acts as a GTF2B/TFIIB-like factor and plays a key role in multiple steps during transcription initiation such as pre-initiation complex (PIC) assembly and postpolymerase recruitment events in polymerase I (Pol I) transcription. Binds rDNA promoters and plays a role in Pol I recruitment. Required for the development of the one-cell zygote and endosperm in embryos. Required for micropylar pollen tube guidance, but has no effect on ovule development and gametophytic cell fate specification. May regulate the transcription of secreted cysteine-rich peptide (CRP) genes in the embryo sac. In Arabidopsis thaliana (Mouse-ear cress), this protein is TATA box-binding protein-associated factor RNA polymerase I subunit B.